We begin with the raw amino-acid sequence, 111 residues long: Phosphoribosyl-ATP pyrophosphatase (111 aa).

The protein belongs to the PRA-PH family.

It is found in the cytoplasm. It catalyses the reaction 1-(5-phospho-beta-D-ribosyl)-ATP + H2O = 1-(5-phospho-beta-D-ribosyl)-5'-AMP + diphosphate + H(+). Its pathway is amino-acid biosynthesis; L-histidine biosynthesis; L-histidine from 5-phospho-alpha-D-ribose 1-diphosphate: step 2/9. This is Phosphoribosyl-ATP pyrophosphatase from Alcanivorax borkumensis (strain ATCC 700651 / DSM 11573 / NCIMB 13689 / SK2).